A 285-amino-acid polypeptide reads, in one-letter code: Sulfotransferase 2A1 (285 aa).

Positions 44, 45, 46, 47, 48, and 49 each coordinate 3'-phosphoadenylyl sulfate. Residue histidine 99 is the Proton acceptor of the active site. Residues arginine 121, serine 129, tyrosine 184, serine 218, methionine 223, arginine 247, lysine 248, and glycine 249 each coordinate 3'-phosphoadenylyl sulfate. A Phosphoserine modification is found at serine 251.

Belongs to the sulfotransferase 1 family. In terms of assembly, homodimer. In terms of tissue distribution, predominanly expressed in liver. Detected also in adrenal gland and in jejunum.

The protein localises to the cytoplasm. The protein resides in the cytosol. The catalysed reaction is an alcohol + 3'-phosphoadenylyl sulfate = an alkyl sulfate + adenosine 3',5'-bisphosphate + H(+). It catalyses the reaction 3beta-hydroxyandrost-5-en-17-one + 3'-phosphoadenylyl sulfate = dehydroepiandrosterone 3-sulfate + adenosine 3',5'-bisphosphate + H(+). It carries out the reaction taurolithocholate + 3'-phosphoadenylyl sulfate = taurolithocholate 3-sulfate + adenosine 3',5'-bisphosphate + H(+). The enzyme catalyses lithocholate + 3'-phosphoadenylyl sulfate = lithocholate sulfate + adenosine 3',5'-bisphosphate + H(+). The catalysed reaction is (24S)-hydroxycholesterol + 3'-phosphoadenylyl sulfate = (24S)-hydroxycholesterol 24-sulfate + adenosine 3',5'-bisphosphate + H(+). It catalyses the reaction (24S)-hydroxycholesterol + 3'-phosphoadenylyl sulfate = (24S)-hydroxycholesterol 3-sulfate + adenosine 3',5'-bisphosphate + H(+). It carries out the reaction (24S)-hydroxycholesterol 24-sulfate + 3'-phosphoadenylyl sulfate = (24S)-hydroxycholesterol 3,24-disulfate + adenosine 3',5'-bisphosphate + H(+). The enzyme catalyses pregnenolone + 3'-phosphoadenylyl sulfate = pregnenolone sulfate + adenosine 3',5'-bisphosphate + H(+). The catalysed reaction is androsterone + 3'-phosphoadenylyl sulfate = androsterone 3alpha-sulfate + adenosine 3',5'-bisphosphate + H(+). Sulfotransferase that utilizes 3'-phospho-5'-adenylyl sulfate (PAPS) as sulfonate donor to catalyze the sulfonation of steroids and bile acids in the liver and adrenal glands. Mediates the sulfation of a wide range of steroids and sterols, including pregnenolone, androsterone, DHEA, bile acids, cholesterol and as well many xenobiotics that contain alcohol and phenol functional groups. Sulfonation increases the water solubility of most compounds, and therefore their renal excretion, but it can also result in bioactivation to form active metabolites. Plays an important role in maintening steroid and lipid homeostasis. Plays a key role in bile acid metabolism. In addition, catalyzes the metabolic activation of potent carcinogenic polycyclic arylmethanols. The protein is Sulfotransferase 2A1 (SULT2A1) of Macaca fascicularis (Crab-eating macaque).